The following is a 370-amino-acid chain: Thiamine-repressible mitochondrial transport protein THI74 (370 aa).

Residues 1 to 10 lie on the Cytoplasmic side of the membrane; it reads MNRVGIDVDH. A helical membrane pass occupies residues 11-31; it reads MIGVLLLAVVVVFWVGASCLT. Residues 32-42 lie on the Mitochondrial intermembrane side of the membrane; sequence NELLETNAYNK. A helical membrane pass occupies residues 43-63; sequence PFFLTYLNISSFALYLTPDLW. Over 64–119 the chain is Cytoplasmic; that stretch reads RIIQSRRKSLQERTERTLPIHTQESFSEFLPLLSSTPSTSSNLSSIADTKVKDTMR. Residues 120 to 140 traverse the membrane as a helical segment; that stretch reads LSLLFCVLWFVANLAANAALS. Residues 129 to 190 enclose the EamA domain; sequence FVANLAANAA…SLFGIILIVM (62 aa). The Mitochondrial intermembrane portion of the chain corresponds to 141 to 146; that stretch reads YTTVAS. Residues 147 to 167 form a helical membrane-spanning segment; the sequence is STILSSTSSFFTLFLATSLGI. Over 168-169 the chain is Cytoplasmic; the sequence is ET. Residues 170–190 form a helical membrane-spanning segment; that stretch reads FSTKKLLGLFVSLFGIILIVM. Residues 191–203 are Mitochondrial intermembrane-facing; sequence QSSKQQDSVSASS. The chain crosses the membrane as a helical span at residues 204-224; sequence FLVGNTLALLGSLGYSVYTTL. Over 225–239 the chain is Cytoplasmic; the sequence is LKYEISSKGLRLDIQ. The chain crosses the membrane as a helical span at residues 240–260; that stretch reads MFLGYVGIFTFLLFWPILIIL. Residues 261 to 273 lie on the Mitochondrial intermembrane side of the membrane; it reads DITHMETFELPSN. Residues 274-294 form a helical membrane-spanning segment; the sequence is FHISFLVMLNCIIIFVSDYFW. The Cytoplasmic portion of the chain corresponds to 295–303; sequence CKALILTSP. The helical transmembrane segment at 304 to 324 threads the bilayer; the sequence is LVVTVALTFTIPLAMFADFVW. Topologically, residues 325–326 are mitochondrial intermembrane; the sequence is RE. A helical transmembrane segment spans residues 327–347; that stretch reads AFFTPWYIIGVIFIFVSFFLV. The Cytoplasmic segment spans residues 348-370; that stretch reads NHRGESAVEKDCAAVEKGPILDA.

The protein resides in the mitochondrion membrane. Its function is as follows. May be involved in thiaminediphosphate transport across the mitochondrial membrane. The chain is Thiamine-repressible mitochondrial transport protein THI74 (THI74) from Saccharomyces cerevisiae (strain ATCC 204508 / S288c) (Baker's yeast).